The chain runs to 541 residues: Pseudokinase FAM20A (541 aa).

The first 33 residues, 1–33 (MPGLRRDRLLTLLLLGALLSADLYFHLWPQVQR), serve as a signal peptide directing secretion. The interval 38-90 (RERPRGCPCTGRASSLARDSAAAASDPGTIVHNFSRTEPRTEPAGGSHSGSSS) is disordered. The span at 49-63 (RASSLARDSAAAASD) shows a compositional bias: low complexity. Residues Asn70, Asn145, and Asn287 are each glycosylated (N-linked (GlcNAc...) asparagine). 4 cysteine pairs are disulfide-bonded: Cys314–Cys330, Cys319–Cys323, Cys378–Cys452, and Cys453–Cys512. Asn388 carries N-linked (GlcNAc...) asparagine glycosylation. N-linked (GlcNAc...) asparagine glycosylation is present at Asn538.

The protein belongs to the FAM20 family. In terms of assembly, interacts with FAM20C; probably forming a heterotetramer of 2 subunits of FAM20A and 2 subunits of FAM20C. Post-translationally, N-glycosylated. Highly expressed in lung and liver. Intermediate levels in thymus and ovary.

Its subcellular location is the secreted. The protein resides in the golgi apparatus. It localises to the endoplasmic reticulum. Its function is as follows. Pseudokinase that acts as an allosteric activator of the Golgi serine/threonine protein kinase FAM20C and is involved in biomineralization of teeth. Forms a complex with FAM20C and increases the ability of FAM20C to phosphorylate the proteins that form the 'matrix' that guides the deposition of the enamel minerals. This Homo sapiens (Human) protein is Pseudokinase FAM20A.